A 279-amino-acid chain; its full sequence is Ribosome maturation factor RimP (279 aa).

Positions Leu197–Lys279 are disordered. Over residues Glu199 to Gly210 the composition is skewed to acidic residues.

It belongs to the RimP family.

It localises to the cytoplasm. Its function is as follows. Required for maturation of 30S ribosomal subunits. In Methylocella silvestris (strain DSM 15510 / CIP 108128 / LMG 27833 / NCIMB 13906 / BL2), this protein is Ribosome maturation factor RimP.